Reading from the N-terminus, the 209-residue chain is Uracil phosphoribosyltransferase (209 aa).

5-phospho-alpha-D-ribose 1-diphosphate-binding positions include Arg79, Arg104, and 131–139 (DPMLATGAS). Uracil is bound by residues Ile194 and 199 to 201 (GDA). A 5-phospho-alpha-D-ribose 1-diphosphate-binding site is contributed by Asp200.

It belongs to the UPRTase family. It depends on Mg(2+) as a cofactor.

It carries out the reaction UMP + diphosphate = 5-phospho-alpha-D-ribose 1-diphosphate + uracil. The protein operates within pyrimidine metabolism; UMP biosynthesis via salvage pathway; UMP from uracil: step 1/1. Its activity is regulated as follows. Allosterically activated by GTP. Functionally, catalyzes the conversion of uracil and 5-phospho-alpha-D-ribose 1-diphosphate (PRPP) to UMP and diphosphate. The polypeptide is Uracil phosphoribosyltransferase (Staphylococcus epidermidis (strain ATCC 35984 / DSM 28319 / BCRC 17069 / CCUG 31568 / BM 3577 / RP62A)).